We begin with the raw amino-acid sequence, 341 residues long: Anthranilate phosphoribosyltransferase (341 aa).

Residues Gly-83, Ser-91, 93-96, 111-115, and Ser-123 contribute to the 5-phospho-alpha-D-ribose 1-diphosphate site; these read NTST and KHGNR. An anthranilate-binding site is contributed by Gly-83. Ser-95 serves as a coordination point for Mg(2+). Asn-114 contributes to the anthranilate binding site. Arg-169 lines the anthranilate pocket. Mg(2+) is bound by residues Asp-228 and Glu-229.

This sequence belongs to the anthranilate phosphoribosyltransferase family. As to quaternary structure, homodimer. Mg(2+) serves as cofactor.

It carries out the reaction N-(5-phospho-beta-D-ribosyl)anthranilate + diphosphate = 5-phospho-alpha-D-ribose 1-diphosphate + anthranilate. The protein operates within amino-acid biosynthesis; L-tryptophan biosynthesis; L-tryptophan from chorismate: step 2/5. Functionally, catalyzes the transfer of the phosphoribosyl group of 5-phosphorylribose-1-pyrophosphate (PRPP) to anthranilate to yield N-(5'-phosphoribosyl)-anthranilate (PRA). This Hyphomonas neptunium (strain ATCC 15444) protein is Anthranilate phosphoribosyltransferase.